Reading from the N-terminus, the 44-residue chain is Thymosin beta-4 (44 aa).

The segment at 1-44 (MSDKPDMGEIQKFNKSKLKKTETQEKNPLPSKETIEQEKQAGES) is disordered. Ser-2 bears the N-acetylserine mark. Ser-2 carries the post-translational modification Phosphoserine. The residue at position 4 (Lys-4) is an N6-acetyllysine. Lys-12 carries the N6-acetyllysine; alternate modification. Lys-12 participates in a covalent cross-link: Glycyl lysine isopeptide (Lys-Gly) (interchain with G-Cter in SUMO2); alternate. Residue Thr-23 is modified to Phosphothreonine. Lys-26 is modified (N6-acetyllysine). The residue at position 31 (Ser-31) is a Phosphoserine. Lys-32 carries the N6-acetyllysine modification. Residues 33–44 (ETIEQEKQAGES) show a composition bias toward basic and acidic residues. The residue at position 34 (Thr-34) is a Phosphothreonine. An N6-acetyllysine modification is found at Lys-39.

Belongs to the thymosin beta family. In terms of assembly, identified in a complex composed of ACTA1, COBL, GSN AND TMSB4X. Interacts with SERPINB1. In terms of processing, acSDKP is inactivated by ACE, which removes the dipeptide Lys-Pro from its C-terminus.

Its subcellular location is the cytoplasm. The protein localises to the cytoskeleton. In terms of biological role, plays an important role in the organization of the cytoskeleton. Binds to and sequesters actin monomers (G actin) and therefore inhibits actin polymerization. Potent inhibitor of bone marrow derived stem cell differentiation. Acts by inhibits the entry of hematopoietic pluripotent stem cells into the S-phase. In Notamacropus eugenii (Tammar wallaby), this protein is Thymosin beta-4 (TMSB4).